The sequence spans 188 residues: MVKIAIFASGSGSNFENIVEHVESGKLENIEVTALYTDHQNAFCIDRAKKHDIPVYINEPKQFDSKAAYEQHLVSLLNEDKVEWIILAGYMRLIGPDLLASFEGKILNIHPSLLPKYKGIDAIGQAYHSGDTITGSTVHYVDCGMDTGEIIEQRQCDIRPDDSKEQLEEKVKKLEYELYPSVIAKIVK.

12–14 (GSN) contacts N(1)-(5-phospho-beta-D-ribosyl)glycinamide. (6R)-10-formyltetrahydrofolate-binding positions include lysine 66, 91–94 (MRLI), and asparagine 108. Histidine 110 (proton donor) is an active-site residue.

This sequence belongs to the GART family.

The enzyme catalyses N(1)-(5-phospho-beta-D-ribosyl)glycinamide + (6R)-10-formyltetrahydrofolate = N(2)-formyl-N(1)-(5-phospho-beta-D-ribosyl)glycinamide + (6S)-5,6,7,8-tetrahydrofolate + H(+). The protein operates within purine metabolism; IMP biosynthesis via de novo pathway; N(2)-formyl-N(1)-(5-phospho-D-ribosyl)glycinamide from N(1)-(5-phospho-D-ribosyl)glycinamide (10-formyl THF route): step 1/1. Its function is as follows. Catalyzes the transfer of a formyl group from 10-formyltetrahydrofolate to 5-phospho-ribosyl-glycinamide (GAR), producing 5-phospho-ribosyl-N-formylglycinamide (FGAR) and tetrahydrofolate. The sequence is that of Phosphoribosylglycinamide formyltransferase from Staphylococcus aureus (strain MSSA476).